A 757-amino-acid polypeptide reads, in one-letter code: MQPIYQYAWIIPFVPLPVTMSIGLGLLLVPTATKNLRRMWAFPSVSLLSIVMVFSADLSVQQIDGSSIYQYLWSWTINNDFSLEFGHLIDPLTSIMSILITTVGIMVLIYSDKYMSHDQGYLRFFAYMSFSNTSMLGLVTSSNLIQIYIFWELVGMCSYLLIGFWFTRPIAANACQKALVTNRVGDFGLLLGILGLYWITGSFEFRDLFEIFNNLIHNNGVNSLFATLCASLLFAGAVAKSAQFPLHVWLPDAMEGPTPISALIHAATMVAAGIFLVARLLPLFTVIPYIMNLISLIGVITVLLGATLALAQRDIKRSLAYSTMSQLGYIMLAPGIGSYRAALFHLITHAYSKALLFLGSGSIIHSMEPIVGYSPDKSQNMVLMGGLRKYVPITKMTFLLGTLSLCGIPPLACFWSKDEILNDSWLYSPIFAIIACATAGLTAFYMFRTYLLTFEGYLYAHFQNYSGTQNSSFYSISIWGKEEPKLVNRNLLLSTINKNEKVSFFSKKTCKINGNVRNLMRSFSTHFDNKDTSMYPHESDNTMLLPLLVLVLFTLFVGFIGIPFDQGVMGLDILSKWLTPSINLLHQNSNYSVNWYEFATNAFFSVSIAYFGIFIASLLYGSVYLFFQNLELINSFVKIGPKRIFLDQIINVIYNWSYNRGYIDVFYATSLTKGIRGLAKLTHFFDRRVIDGIMNGVGVSSFFVGEGIKYLGGGRISSYLFVYLSYVSIFLLIYIFFFRKVESIKLFQTKNGIPLYL.

Transmembrane regions (helical) follow at residues 9–29, 40–60, 89–109, 122–139, 147–167, 185–205, 219–239, 258–278, 280–300, 327–347, 354–374, 396–416, 425–445, 544–564, 607–627, 692–712, and 718–738; these read WIIP…LLLV, WAFP…DLSV, IDPL…MVLI, LRFF…LGLV, IYIF…FWFT, GDFG…SFEF, NGVN…GAVA, TPIS…FLVA, LLPL…IGVI, LGYI…FHLI, ALLF…VGYS, MTFL…CFWS, WLYS…TAFY, LLPL…GIPF, SIAY…YLFF, GIMN…KYLG, and SYLF…IFFF.

This sequence belongs to the complex I subunit 5 family. NDH is composed of at least 16 different subunits, 5 of which are encoded in the nucleus.

Its subcellular location is the plastid. It localises to the chloroplast thylakoid membrane. It carries out the reaction a plastoquinone + NADH + (n+1) H(+)(in) = a plastoquinol + NAD(+) + n H(+)(out). The catalysed reaction is a plastoquinone + NADPH + (n+1) H(+)(in) = a plastoquinol + NADP(+) + n H(+)(out). Functionally, NDH shuttles electrons from NAD(P)H:plastoquinone, via FMN and iron-sulfur (Fe-S) centers, to quinones in the photosynthetic chain and possibly in a chloroplast respiratory chain. The immediate electron acceptor for the enzyme in this species is believed to be plastoquinone. Couples the redox reaction to proton translocation, and thus conserves the redox energy in a proton gradient. This is NAD(P)H-quinone oxidoreductase subunit 5, chloroplastic (ndhF) from Drimys granadensis.